We begin with the raw amino-acid sequence, 465 residues long: Mitochondrial-processing peptidase subunit beta (465 aa).

H79 is a Zn(2+) binding site. Residue E82 is the Proton acceptor of the active site. Residues H83 and E159 each contribute to the Zn(2+) site.

It belongs to the peptidase M16 family. As to quaternary structure, heterodimer of an alpha subunit and a beta subunit subunits, forming the mitochondrial processing protease (MPP) in which the alpha subunit is involved in substrate recognition and binding and the beta subunit is the catalytic subunit. The cofactor is Zn(2+).

It is found in the mitochondrion matrix. The catalysed reaction is Release of N-terminal transit peptides from precursor proteins imported into the mitochondrion, typically with Arg in position P2.. Its activity is regulated as follows. Binding to the alpha subunit is required for catalytic activity. Its function is as follows. Catalytic subunit of the essential mitochondrial processing protease (MPP), which cleaves the mitochondrial sequence off newly imported precursors proteins. Preferentially, cleaves after an arginine at position P2. The chain is Mitochondrial-processing peptidase subunit beta (MPP1) from Blastocladiella emersonii (Aquatic fungus).